A 218-amino-acid polypeptide reads, in one-letter code: ATP phosphoribosyltransferase (218 aa).

It belongs to the ATP phosphoribosyltransferase family. Short subfamily. As to quaternary structure, heteromultimer composed of HisG and HisZ subunits.

Its subcellular location is the cytoplasm. It carries out the reaction 1-(5-phospho-beta-D-ribosyl)-ATP + diphosphate = 5-phospho-alpha-D-ribose 1-diphosphate + ATP. It functions in the pathway amino-acid biosynthesis; L-histidine biosynthesis; L-histidine from 5-phospho-alpha-D-ribose 1-diphosphate: step 1/9. Its function is as follows. Catalyzes the condensation of ATP and 5-phosphoribose 1-diphosphate to form N'-(5'-phosphoribosyl)-ATP (PR-ATP). Has a crucial role in the pathway because the rate of histidine biosynthesis seems to be controlled primarily by regulation of HisG enzymatic activity. This Trichormus variabilis (strain ATCC 29413 / PCC 7937) (Anabaena variabilis) protein is ATP phosphoribosyltransferase.